The primary structure comprises 145 residues: uncharacterized protein (145 aa).

A signal peptide spans 1-20 (MKTCTVICCTALVLGLTAYA).

This is an uncharacterized protein from Aedes vexans (Inland floodwater mosquito).